Here is a 355-residue protein sequence, read N- to C-terminus: UDP-N-acetylglucosamine--N-acetylmuramyl-(pentapeptide) pyrophosphoryl-undecaprenol N-acetylglucosamine transferase (355 aa).

Residues 15 to 17 (TGG), asparagine 127, arginine 163, serine 191, isoleucine 244, 263 to 268 (ALTVSE), and glutamine 288 each bind UDP-N-acetyl-alpha-D-glucosamine.

Belongs to the glycosyltransferase 28 family. MurG subfamily.

The protein resides in the cell inner membrane. The enzyme catalyses di-trans,octa-cis-undecaprenyl diphospho-N-acetyl-alpha-D-muramoyl-L-alanyl-D-glutamyl-meso-2,6-diaminopimeloyl-D-alanyl-D-alanine + UDP-N-acetyl-alpha-D-glucosamine = di-trans,octa-cis-undecaprenyl diphospho-[N-acetyl-alpha-D-glucosaminyl-(1-&gt;4)]-N-acetyl-alpha-D-muramoyl-L-alanyl-D-glutamyl-meso-2,6-diaminopimeloyl-D-alanyl-D-alanine + UDP + H(+). The protein operates within cell wall biogenesis; peptidoglycan biosynthesis. Functionally, cell wall formation. Catalyzes the transfer of a GlcNAc subunit on undecaprenyl-pyrophosphoryl-MurNAc-pentapeptide (lipid intermediate I) to form undecaprenyl-pyrophosphoryl-MurNAc-(pentapeptide)GlcNAc (lipid intermediate II). The polypeptide is UDP-N-acetylglucosamine--N-acetylmuramyl-(pentapeptide) pyrophosphoryl-undecaprenol N-acetylglucosamine transferase (Escherichia coli O9:H4 (strain HS)).